Consider the following 376-residue polypeptide: uncharacterized protein (376 aa).

Positions 1–22 (MVATGRIIITLLAAALDEIILA) are cleaved as a signal peptide.

This sequence belongs to the ascovirus HvAV ORF17 family.

This is an uncharacterized protein from Heliothis virescens ascovirus 3e (HvAV-3e).